Reading from the N-terminus, the 397-residue chain is MNWHFPFFILTTVTLSSVYSQLNSLSLEELGSDTGIQVFNQIIKSQPHENVVISPHGIASILGMLQLGADGRTKKQLSTVMRYNVNGVGKVLKKINKAIVSKKNKDIVTVANAVFVRNGFKVEVPFAARNKEVFQCEVQSVNFQDPASACDAINFWVKNETRGMIDNLLSPNLIDSALTKLVLVNAVYFKGLWKSRFQPENTKKRTFVAGDGKSYQVPMLAQLSVFRSGSTKTPNGLWYNFIELPYHGESISMLIALPTESSTPLSAIIPHISTKTINSWMNTMVPKRMQLVLPKFTALAQTDLKEPLKALGITEMFEPSKANFAKITRSESLHVSHILQKAKIEVSEDGTKAAVVTTAILIARSSPPWFIVDRPFLFCIRHNPTGAILFLGQVNKP.

Positions 1-19 are cleaved as a signal peptide; that stretch reads MNWHFPFFILTTVTLSSVY. N-linked (GlcNAc...) asparagine glycosylation occurs at asparagine 159.

This sequence belongs to the serpin family.

The protein localises to the secreted. It localises to the extracellular space. In terms of biological role, serine protease inhibitor with activity toward thrombin, trypsin, and urokinase. Promotes neurite extension by inhibiting thrombin. Binds heparin. The protein is Glia-derived nexin (Serpine2) of Rattus norvegicus (Rat).